Reading from the N-terminus, the 289-residue chain is ATP phosphoribosyltransferase (289 aa).

It belongs to the ATP phosphoribosyltransferase family. Long subfamily. Mg(2+) is required as a cofactor.

The protein localises to the cytoplasm. The enzyme catalyses 1-(5-phospho-beta-D-ribosyl)-ATP + diphosphate = 5-phospho-alpha-D-ribose 1-diphosphate + ATP. Its pathway is amino-acid biosynthesis; L-histidine biosynthesis; L-histidine from 5-phospho-alpha-D-ribose 1-diphosphate: step 1/9. Feedback inhibited by histidine. In terms of biological role, catalyzes the condensation of ATP and 5-phosphoribose 1-diphosphate to form N'-(5'-phosphoribosyl)-ATP (PR-ATP). Has a crucial role in the pathway because the rate of histidine biosynthesis seems to be controlled primarily by regulation of HisG enzymatic activity. The chain is ATP phosphoribosyltransferase from Solibacter usitatus (strain Ellin6076).